The chain runs to 253 residues: Ribonuclease HII (253 aa).

Residues 30–221 (GPVAGVDEVG…VRRLVVDGEP (192 aa)) enclose the RNase H type-2 domain. Positions 36, 37, and 130 each coordinate a divalent metal cation.

Belongs to the RNase HII family. Mn(2+) is required as a cofactor. Mg(2+) serves as cofactor.

It is found in the cytoplasm. It catalyses the reaction Endonucleolytic cleavage to 5'-phosphomonoester.. Endonuclease that specifically degrades the RNA of RNA-DNA hybrids. The protein is Ribonuclease HII of Mycolicibacterium gilvum (strain PYR-GCK) (Mycobacterium gilvum (strain PYR-GCK)).